The primary structure comprises 333 residues: NADH dehydrogenase (ubiquinone) complex I, assembly factor 6 (333 aa).

A mitochondrion-targeting transit peptide spans 1–44 (MAASAHGSVWGPLRLGIPGLCCRRPPLGLYARMRRLPGPEVSGR).

It belongs to the NDUFAF6 family. In terms of tissue distribution, widely expressed. A lower expression is observed in lung and kidney compared to heart, muscle and liver. In the kidney, expression is high in the basal zone of the proximal tubular cells.

The protein localises to the mitochondrion inner membrane. It is found in the cytoplasm. The protein resides in the nucleus. Its function is as follows. Involved in the assembly of mitochondrial NADH:ubiquinone oxidoreductase complex (complex I) at early stages. May play a role in the biogenesis of complex I subunit MT-ND1. This Homo sapiens (Human) protein is NADH dehydrogenase (ubiquinone) complex I, assembly factor 6 (NDUFAF6).